The chain runs to 234 residues: ATP synthase subunit a 2 (234 aa).

Transmembrane regions (helical) follow at residues 29-49 (FFQH…VGLL), 90-110 (LIAT…IPGF), 116-136 (SLNT…IVGV), 147-167 (FMGP…IGHL), 186-206 (IVLM…MMLM), and 207-227 (GILV…IYIA).

The protein belongs to the ATPase A chain family. As to quaternary structure, F-type ATPases have 2 components, CF(1) - the catalytic core - and CF(0) - the membrane proton channel. CF(1) has five subunits: alpha(3), beta(3), gamma(1), delta(1), epsilon(1). CF(0) has three main subunits: a(1), b(2) and c(9-12). The alpha and beta chains form an alternating ring which encloses part of the gamma chain. CF(1) is attached to CF(0) by a central stalk formed by the gamma and epsilon chains, while a peripheral stalk is formed by the delta and b chains.

The protein resides in the cell inner membrane. In terms of biological role, key component of the proton channel; it plays a direct role in the translocation of protons across the membrane. The protein is ATP synthase subunit a 2 of Syntrophotalea carbinolica (strain DSM 2380 / NBRC 103641 / GraBd1) (Pelobacter carbinolicus).